Consider the following 115-residue polypeptide: Holo-[acyl-carrier-protein] synthase (115 aa).

The Mg(2+) site is built by Asp-5 and Glu-50.

This sequence belongs to the P-Pant transferase superfamily. AcpS family. Mg(2+) serves as cofactor.

It is found in the cytoplasm. The enzyme catalyses apo-[ACP] + CoA = holo-[ACP] + adenosine 3',5'-bisphosphate + H(+). Transfers the 4'-phosphopantetheine moiety from coenzyme A to a Ser of acyl-carrier-protein. In Campylobacter fetus subsp. fetus (strain 82-40), this protein is Holo-[acyl-carrier-protein] synthase.